The chain runs to 198 residues: MNREEQLGILESLLFAAGDAGLSTEQLTEVMEITHIEALNLLELLSERYNGSADRGLILLELAGTFQLATKKAHADYLRKLVEVPSNTVLSQASLETLAIIAYRQPVTRMEVDEVRGVQTDGPIRTLVAKGLVTDKGRVDGAGRAKLYVTTSEFLDAFGLNSLEDLPKLADPAAEEPDQNEMDLFFDRFNQSKEQEEE.

The interval 169–198 (LADPAAEEPDQNEMDLFFDRFNQSKEQEEE) is disordered.

This sequence belongs to the ScpB family. As to quaternary structure, homodimer. Homodimerization may be required to stabilize the binding of ScpA to the Smc head domains. Component of a cohesin-like complex composed of ScpA, ScpB and the Smc homodimer, in which ScpA and ScpB bind to the head domain of Smc. The presence of the three proteins is required for the association of the complex with DNA.

The protein localises to the cytoplasm. Participates in chromosomal partition during cell division. May act via the formation of a condensin-like complex containing Smc and ScpA that pull DNA away from mid-cell into both cell halves. The chain is Segregation and condensation protein B from Listeria monocytogenes serotype 4a (strain HCC23).